A 284-amino-acid chain; its full sequence is L-ribulose-5-phosphate 3-epimerase UlaE (284 aa).

Belongs to the L-ribulose-5-phosphate 3-epimerase family.

The enzyme catalyses L-ribulose 5-phosphate = L-xylulose 5-phosphate. Its pathway is cofactor degradation; L-ascorbate degradation; D-xylulose 5-phosphate from L-ascorbate: step 3/4. Catalyzes the isomerization of L-xylulose-5-phosphate to L-ribulose-5-phosphate. Is involved in the anaerobic L-ascorbate utilization. The sequence is that of L-ribulose-5-phosphate 3-epimerase UlaE from Salmonella typhimurium (strain LT2 / SGSC1412 / ATCC 700720).